A 145-amino-acid chain; its full sequence is Large ribosomal subunit protein uL15 (145 aa).

Residues 1–50 form a disordered region; that stretch reads MLHTIKPVTNARKSTKRLGRGPGSGTGKTSGKGHKGQLARSGKTLRPGFE. Residues 20-30 show a composition bias toward gly residues; it reads RGPGSGTGKTS.

The protein belongs to the universal ribosomal protein uL15 family. As to quaternary structure, part of the 50S ribosomal subunit.

Binds to the 23S rRNA. The chain is Large ribosomal subunit protein uL15 from Aster yellows witches'-broom phytoplasma (strain AYWB).